A 778-amino-acid chain; its full sequence is Endonuclease MutS2 (778 aa).

328–335 (GPNTGGKT) lines the ATP pocket. The Smr domain maps to 702 to 777 (LDLRGKRYEE…GSGATIVTFK (76 aa)).

Belongs to the DNA mismatch repair MutS family. MutS2 subfamily. In terms of assembly, homodimer. Binds to stalled ribosomes, contacting rRNA.

Endonuclease that is involved in the suppression of homologous recombination and thus may have a key role in the control of bacterial genetic diversity. Functionally, acts as a ribosome collision sensor, splitting the ribosome into its 2 subunits. Detects stalled/collided 70S ribosomes which it binds and splits by an ATP-hydrolysis driven conformational change. Acts upstream of the ribosome quality control system (RQC), a ribosome-associated complex that mediates the extraction of incompletely synthesized nascent chains from stalled ribosomes and their subsequent degradation. Probably generates substrates for RQC. The sequence is that of Endonuclease MutS2 from Streptococcus pneumoniae (strain P1031).